We begin with the raw amino-acid sequence, 329 residues long: Tryptophan--tRNA ligase (329 aa).

Residues 9-11 and 17-18 each bind ATP; these read QPS and GN. The 'HIGH' region signature appears at 10–18; sequence PSGIPTIGN. Asp-133 is a binding site for L-tryptophan. ATP contacts are provided by residues 145-147, Val-184, and 193-197; these read GDD and KMSKS. Positions 193 to 197 match the 'KMSKS' region motif; sequence KMSKS.

The protein belongs to the class-I aminoacyl-tRNA synthetase family. As to quaternary structure, homodimer.

It localises to the cytoplasm. The catalysed reaction is tRNA(Trp) + L-tryptophan + ATP = L-tryptophyl-tRNA(Trp) + AMP + diphosphate + H(+). Functionally, catalyzes the attachment of tryptophan to tRNA(Trp). This chain is Tryptophan--tRNA ligase, found in Staphylococcus aureus (strain MRSA252).